The following is a 609-amino-acid chain: MIQVLLVTICLAVFPYQGSSIILGSGNVNDYEVVYPRKVTAVPKGAVQPKYEDTMQYEFKVNGEPVVLHLEKNKGLFSKDYSETHYSPDGREITTYPSVEDHCYYHGRIQNDADSTASISACNGLKGHFKLQGEMYLIEPLRFSDSEAHAVFKYENVEKEDEAPKMCGVTQTNWESDEPIKKASKLVVTAEQQRYLNNFRFIELVIVADYRMFTKFNSNLNEVKTWVYEIVNTLNEIYRYLYVRVALVALEVWSNGDLSSVTLSAYDTLDSFGEWRKRDLLKRKSHDNAQLLTAIDFNGTIIGLAHVASMCDPKCSTGIVQDYSSRNLVVAVIMAHEMGHNLGIRHDRENCTCHANSCIMSAVISDQPSKYFSNCSHVQYWNYINDDEPQCILNEPLRTDIVSPPVCGNELLEVGEECDCGSPATCRYPCCDAATCKLHSWVECESGECCEQCRFRTAGTECRARRSECDIAESCTGHSADCPTDRFHRNGQPCLHNFGYCYNGNCPIMYHQCYALWGANATVAKDSCFEDNQKGNDYGYCRKENGRKIPCEPQDVKCGRLYCSLGNQLPCRFFYTPTDENIGMVDTGTKCGDKKVCSNRQCVDVNTAY.

A signal peptide spans 1–20; that stretch reads MIQVLLVTICLAVFPYQGSS. Residues 21-190 constitute a propeptide that is removed on maturation; the sequence is IILGSGNVND…KKASKLVVTA (170 aa). Residues 200 to 396 enclose the Peptidase M12B domain; that stretch reads RFIELVIVAD…DEPQCILNEP (197 aa). Ca(2+) contacts are provided by Glu-203 and Asp-287. The N-linked (GlcNAc...) asparagine glycan is linked to Asn-298. 3 disulfides stabilise this stretch: Cys-311–Cys-391, Cys-351–Cys-375, and Cys-353–Cys-358. Residue His-336 coordinates Zn(2+). Residue Glu-337 is part of the active site. Positions 340 and 346 each coordinate Zn(2+). Asn-350 carries an N-linked (GlcNAc...) asparagine glycan. Residue Asn-374 is glycosylated (N-linked (GlcNAc...) asparagine). Ca(2+) is bound by residues Cys-391 and Asn-394. The propeptide occupies 397-400; that stretch reads LRTD. A Disintegrin domain is found at 404–490; the sequence is PPVCGNELLE…DCPTDRFHRN (87 aa). Residues Val-406, Asn-409, Leu-411, Glu-413, Glu-416, and Asp-419 each contribute to the Ca(2+) site. Disulfide bonds link Cys-407–Cys-426, Cys-407–Cys-436, Cys-418–Cys-431, Cys-418–Cys-436, Cys-420–Cys-426, Cys-430–Cys-453, Cys-444–Cys-450, Cys-449–Cys-475, Cys-462–Cys-482, Cys-469–Cys-494, Cys-469–Cys-501, Cys-494–Cys-506, Cys-501–Cys-506, Cys-513–Cys-528, Cys-513–Cys-563, Cys-528–Cys-571, Cys-541–Cys-551, Cys-551–Cys-558, Cys-558–Cys-597, Cys-563–Cys-571, Cys-591–Cys-602, and Cys-597–Cys-602. A D/ECD-tripeptide motif is present at residues 468 to 470; it reads ECD. Ca(2+) is bound by residues Asp-470, Glu-473, and Asp-485. An N-linked (GlcNAc...) asparagine glycan is attached at Asn-520.

It belongs to the venom metalloproteinase (M12B) family. P-III subfamily. P-IIIb sub-subfamily. In terms of assembly, monomer. It depends on Zn(2+) as a cofactor. Expressed by the venom gland.

It is found in the secreted. Zinc protease that induces hemorrhage and has proteolytic activity. Has preference for Ala, His, Pro, Met, and Tyr at the P1 position, in descending order (in vitro). Predominantly prefers Val and Asp at the P3 and P2 positions, respectively. Functionally, inhibits platelet aggregation induced by ADP, thrombin, platelet-activating factor and collagen. Acts by inhibiting fibrinogen interaction with platelet receptors alpha-IIb/beta-3 (ITGA2B/ITGB3). The chain is Zinc metalloproteinase/disintegrin-like HR1a from Protobothrops flavoviridis (Habu).